Reading from the N-terminus, the 672-residue chain is Threonine--tRNA ligase (672 aa).

In terms of domain architecture, TGS spans 1–64 (MTELLKISLP…EGDAELALIT (64 aa)). The segment at 257–566 (DHRKLGREMD…LIEHFAGRLP (310 aa)) is catalytic. Zn(2+)-binding residues include Cys-362, His-413, and His-543.

Belongs to the class-II aminoacyl-tRNA synthetase family. As to quaternary structure, homodimer. Zn(2+) serves as cofactor.

The protein localises to the cytoplasm. It catalyses the reaction tRNA(Thr) + L-threonine + ATP = L-threonyl-tRNA(Thr) + AMP + diphosphate + H(+). Catalyzes the attachment of threonine to tRNA(Thr) in a two-step reaction: L-threonine is first activated by ATP to form Thr-AMP and then transferred to the acceptor end of tRNA(Thr). Also edits incorrectly charged L-seryl-tRNA(Thr). This chain is Threonine--tRNA ligase, found in Erythrobacter litoralis (strain HTCC2594).